Here is a 147-residue protein sequence, read N- to C-terminus: Hemoglobin subunit beta-Y (147 aa).

A Globin domain is found at 3 to 147 (HFTAEEKAAI…VANALSLKYH (145 aa)). Heme b-binding residues include histidine 64 and histidine 93.

This sequence belongs to the globin family. As to quaternary structure, heterotetramer of two alpha chains and two beta chains.

This is a minor early embryonic beta chain. The protein is Hemoglobin subunit beta-Y (HBBY) of Mesocricetus auratus (Golden hamster).